The sequence spans 269 residues: Ubiquinone/menaquinone biosynthesis C-methyltransferase UbiE (269 aa).

S-adenosyl-L-methionine is bound by residues T92, D113, and 141 to 142; that span reads NA.

This sequence belongs to the class I-like SAM-binding methyltransferase superfamily. MenG/UbiE family.

The catalysed reaction is a 2-demethylmenaquinol + S-adenosyl-L-methionine = a menaquinol + S-adenosyl-L-homocysteine + H(+). It catalyses the reaction a 2-methoxy-6-(all-trans-polyprenyl)benzene-1,4-diol + S-adenosyl-L-methionine = a 5-methoxy-2-methyl-3-(all-trans-polyprenyl)benzene-1,4-diol + S-adenosyl-L-homocysteine + H(+). It participates in quinol/quinone metabolism; menaquinone biosynthesis; menaquinol from 1,4-dihydroxy-2-naphthoate: step 2/2. Its pathway is cofactor biosynthesis; ubiquinone biosynthesis. Functionally, methyltransferase required for the conversion of demethylmenaquinol (DMKH2) to menaquinol (MKH2) and the conversion of 2-polyprenyl-6-methoxy-1,4-benzoquinol (DDMQH2) to 2-polyprenyl-3-methyl-6-methoxy-1,4-benzoquinol (DMQH2). The protein is Ubiquinone/menaquinone biosynthesis C-methyltransferase UbiE of Brucella suis (strain ATCC 23445 / NCTC 10510).